A 332-amino-acid chain; its full sequence is Ornithine carbamoyltransferase, catabolic (332 aa).

Carbamoyl phosphate is bound by residues Ser-60–Thr-63, Gln-87, Arg-111, and His-138–Gln-141. L-ornithine contacts are provided by residues Asn-170, Asp-230, and Ser-234–Met-235. Carbamoyl phosphate is bound by residues Cys-271–Leu-272 and Arg-316.

Belongs to the aspartate/ornithine carbamoyltransferase superfamily. OTCase family.

It localises to the cytoplasm. It catalyses the reaction carbamoyl phosphate + L-ornithine = L-citrulline + phosphate + H(+). It functions in the pathway amino-acid degradation; L-arginine degradation via ADI pathway; carbamoyl phosphate from L-arginine: step 2/2. Its function is as follows. Reversibly catalyzes the transfer of the carbamoyl group from carbamoyl phosphate (CP) to the N(epsilon) atom of ornithine (ORN) to produce L-citrulline. This chain is Ornithine carbamoyltransferase, catabolic, found in Bacillus thuringiensis subsp. konkukian (strain 97-27).